Consider the following 244-residue polypeptide: tRNA pseudouridine synthase B (244 aa).

The active-site Nucleophile is the D46.

The protein belongs to the pseudouridine synthase TruB family. Type 1 subfamily.

The catalysed reaction is uridine(55) in tRNA = pseudouridine(55) in tRNA. Its function is as follows. Responsible for synthesis of pseudouridine from uracil-55 in the psi GC loop of transfer RNAs. The polypeptide is tRNA pseudouridine synthase B (Bordetella parapertussis (strain 12822 / ATCC BAA-587 / NCTC 13253)).